The chain runs to 385 residues: Zinc finger protein B385R (385 aa).

C2H2-type zinc fingers lie at residues 166 to 190 (LQCPNCGCIQELMGTIFDETHFYNH) and 168 to 190 (CPNCGCIQELMGTIFDETHFYNH).

The protein belongs to the asfivirus B385R family.

The protein is Zinc finger protein B385R of African swine fever virus (isolate Tick/Malawi/Lil 20-1/1983) (ASFV).